The primary structure comprises 841 residues: Toll-like receptor 4 (841 aa).

Residues Met-1–Thr-23 form the signal peptide. Residues Glu-24–Lys-632 are Extracellular-facing. Cysteines 29 and 40 form a disulfide. Asn-35 and Asn-73 each carry an N-linked (GlcNAc...) asparagine glycan. LRR repeat units follow at residues Ser-55–Ser-76, Glu-79–Gly-100, His-103–Gly-124, Ser-127–His-148, Thr-151–Ser-172, Asn-176–Val-197, and Asn-205–Glu-225. Asn-205, Asn-238, Asn-282, and Asn-309 each carry an N-linked (GlcNAc...) asparagine glycan. Cys-281 and Cys-306 form a disulfide bridge. 9 LRR repeats span residues Ser-352 to Pro-373, Ser-374 to Asp-395, Asn-400 to Glu-422, Lys-423 to Leu-444, Asn-448 to Gly-469, Ser-472 to Leu-495, Asn-497 to Ser-518, Ser-521 to Pro-542, and Leu-545 to Pro-568. A disulfide bridge links Cys-390 with Cys-391. N-linked (GlcNAc...) asparagine glycans are attached at residues Asn-497 and Asn-526. N-linked (GlcNAc...) asparagine glycosylation is found at Asn-570 and Asn-575. An LRRCT domain is found at Asn-579 to Met-630. Disulfide bonds link Cys-583/Cys-609 and Cys-585/Cys-628. Asn-625 carries N-linked (GlcNAc...) asparagine glycosylation. The helical transmembrane segment at Met-633–Tyr-653 threads the bilayer. The Cytoplasmic portion of the chain corresponds to Lys-654–Thr-841. The region spanning Ser-673–Leu-816 is the TIR domain. Residues Lys-820–Thr-841 form a disordered region. Positions Ala-830–Thr-841 are enriched in polar residues.

This sequence belongs to the Toll-like receptor family. In terms of assembly, belongs to the lipopolysaccharide (LPS) receptor, a multi-protein complex containing at least CD14, LY96 and TLR4. Binding to bacterial LPS leads to homodimerization. Interacts with LY96 via the extracellular domain. Interacts with MYD88 and TIRAP via their respective TIR domains. Interacts with TICAM2. Interacts with NOX4. Interacts with CNPY3 and HSP90B1; this interaction is required for proper folding in the endoplasmic reticulum. Interacts with MAP3K21; this interaction leads to negative regulation of TLR4 signaling. Interacts with CD36, following CD36 stimulation by oxLDL or amyloid-beta 42, and forms a heterodimer with TLR6. The trimeric complex is internalized and triggers inflammatory response. LYN kinase activity facilitates TLR4-TLR6 heterodimerization and signal initiation. Interacts with TICAM1 in response to LPS in a WDFY1-dependent manner. Interacts with WDFY1 in response to LPS. Interacts with SMPDL3B. Interacts with CEACAM1; upon lipopolysaccharide stimulation, forms a complex including TLR4 and the phosphorylated form of SYK and CEACAM1, which in turn, recruits PTPN6 that dephosphorylates SYK, reducing the production of reactive oxygen species (ROS) and lysosome disruption, which in turn, reduces the activity of the inflammasome. Interacts with RFTN1; the interaction occurs in response to lipopolysaccharide stimulation. Interacts with SCIMP; the interaction occurs in response to lipopolysaccharide stimulation and is enhanced by phosphorylation of SCIMP by LYN. This interaction facilitates the phosphorylation of TLR4 by LYN which elicits a selective cytokine response in macrophages. Interacts with TRAF3IP3. Interacts with TREM1; this interaction enhances TLR4-mediated inflammatory response. Interacts with ZG16B/PAUF. Interacts with CD82; this interaction inhibits TLR4-mediated signaling pathway. Post-translationally, phosphorylated on tyrosine residues by LYN after binding lipopolysaccharide. In terms of processing, ubiquitinated by RNF128 via 'Lys-28'-linked polyubiquitin chains, leading to proteasomal degradation.

The protein localises to the cell membrane. Its subcellular location is the early endosome. The protein resides in the cell projection. It is found in the ruffle. Transmembrane receptor that functions as a pattern recognition receptor recognizing pathogen- and damage-associated molecular patterns (PAMPs and DAMPs) to induce innate immune responses via downstream signaling pathways. At the plasma membrane, cooperates with LY96 to mediate the innate immune response to bacterial lipopolysaccharide (LPS). Also involved in LPS-independent inflammatory responses triggered by free fatty acids, such as palmitate, and Ni(2+). Mechanistically, acts via MYD88, TIRAP and TRAF6, leading to NF-kappa-B activation, cytokine secretion and the inflammatory response. Alternatively, CD14-mediated TLR4 internalization via endocytosis is associated with the initiation of a MYD88-independent signaling via the TICAM1-TBK1-IRF3 axis leading to type I interferon production. In addition to the secretion of proinflammatory cytokines, initiates the activation of NLRP3 inflammasome and formation of a positive feedback loop between autophagy and NF-kappa-B signaling cascade. In complex with TLR6, promotes inflammation in monocytes/macrophages by associating with TLR6 and the receptor CD86. Upon ligand binding, such as oxLDL or amyloid-beta 42, the TLR4:TLR6 complex is internalized and triggers inflammatory response, leading to NF-kappa-B-dependent production of CXCL1, CXCL2 and CCL9 cytokines, via MYD88 signaling pathway, and CCL5 cytokine, via TICAM1 signaling pathway. In myeloid dendritic cells, vesicular stomatitis virus glycoprotein G but not LPS promotes the activation of IRF7, leading to type I IFN production in a CD14-dependent manner. This Boselaphus tragocamelus (Nilgai) protein is Toll-like receptor 4 (TLR4).